The chain runs to 257 residues: Small ribosomal subunit protein uS15m (257 aa).

Residues M1–K57 constitute a mitochondrion transit peptide. The interval R225–Q257 is disordered.

The protein belongs to the universal ribosomal protein uS15 family. As to quaternary structure, component of the mitochondrial small ribosomal subunit (mt-SSU). Mature mammalian 55S mitochondrial ribosomes consist of a small (28S) and a large (39S) subunit. The 28S small subunit contains a 12S ribosomal RNA (12S mt-rRNA) and 30 different proteins. The 39S large subunit contains a 16S rRNA (16S mt-rRNA), a copy of mitochondrial valine transfer RNA (mt-tRNA(Val)), which plays an integral structural role, and 52 different proteins. Interacts with METTL17.

It is found in the mitochondrion matrix. This chain is Small ribosomal subunit protein uS15m (MRPS15), found in Homo sapiens (Human).